The chain runs to 173 residues: Crossover junction endodeoxyribonuclease RuvC (173 aa).

Catalysis depends on residues D8, E67, and D139. Residues D8, E67, and D139 each coordinate Mg(2+).

It belongs to the RuvC family. In terms of assembly, homodimer which binds Holliday junction (HJ) DNA. The HJ becomes 2-fold symmetrical on binding to RuvC with unstacked arms; it has a different conformation from HJ DNA in complex with RuvA. In the full resolvosome a probable DNA-RuvA(4)-RuvB(12)-RuvC(2) complex forms which resolves the HJ. Requires Mg(2+) as cofactor.

The protein localises to the cytoplasm. It carries out the reaction Endonucleolytic cleavage at a junction such as a reciprocal single-stranded crossover between two homologous DNA duplexes (Holliday junction).. In terms of biological role, the RuvA-RuvB-RuvC complex processes Holliday junction (HJ) DNA during genetic recombination and DNA repair. Endonuclease that resolves HJ intermediates. Cleaves cruciform DNA by making single-stranded nicks across the HJ at symmetrical positions within the homologous arms, yielding a 5'-phosphate and a 3'-hydroxyl group; requires a central core of homology in the junction. The consensus cleavage sequence is 5'-(A/T)TT(C/G)-3'. Cleavage occurs on the 3'-side of the TT dinucleotide at the point of strand exchange. HJ branch migration catalyzed by RuvA-RuvB allows RuvC to scan DNA until it finds its consensus sequence, where it cleaves and resolves the cruciform DNA. The sequence is that of Crossover junction endodeoxyribonuclease RuvC from Cronobacter sakazakii (strain ATCC BAA-894) (Enterobacter sakazakii).